The sequence spans 282 residues: MLLMIINGEGHILGRLASVVSKKLLEGEEVIVLNAEKILITGSKEWAYGKYKQRIDRASISNPRRMGPKYPRRPDDIFRRTVRGMLPYKKSKGREAFKGLKAYVGIPREFKDEEMVEIPDAKAGSIKKGMELGEISELLGARLQIGSVIMKKVIHTSGKRKTAIARGTIREGKGRVRINKVPVELYTPELARLKIMEPLKLAGDVINDVDINVRVVGGGIVGQAEAARMVIARGLVDWTSDMDLKEKFVQYDRTMLVGDPRRSEPKKYGGRGARARRQKSYR.

The tract at residues Met-1–Ala-141 is large ribosomal subunit protein uL13. The interval Met-150 to Arg-282 is small ribosomal subunit protein uS9. A disordered region spans residues Asp-259–Arg-282. Over residues Ala-273 to Arg-282 the composition is skewed to basic residues.

The protein in the N-terminal section; belongs to the universal ribosomal protein uL13 family. In the C-terminal section; belongs to the universal ribosomal protein uS9 family. As to quaternary structure, L13 is part of the 50S ribosomal subunit. S9 is part of the 30S ribosomal subunit.

L13 protein is one of the early assembly proteins of the 50S ribosomal subunit, although it is not seen to bind rRNA by itself. It is important during the early stages of 50S assembly. This chain is Fused uL13/uS9 ribosomal subunit protein (rpl13/rps9), found in Methanothermobacter thermautotrophicus (strain ATCC 29096 / DSM 1053 / JCM 10044 / NBRC 100330 / Delta H) (Methanobacterium thermoautotrophicum).